Here is a 704-residue protein sequence, read N- to C-terminus: Elongation factor G (704 aa).

In terms of domain architecture, tr-type G spans 8–291 (DRVRNIGIMA…AVIEYLASPV (284 aa)). GTP is bound by residues 17-24 (AHIDAGKT), 90-94 (DTPGH), and 144-147 (NKMD).

It belongs to the TRAFAC class translation factor GTPase superfamily. Classic translation factor GTPase family. EF-G/EF-2 subfamily.

Its subcellular location is the cytoplasm. Functionally, catalyzes the GTP-dependent ribosomal translocation step during translation elongation. During this step, the ribosome changes from the pre-translocational (PRE) to the post-translocational (POST) state as the newly formed A-site-bound peptidyl-tRNA and P-site-bound deacylated tRNA move to the P and E sites, respectively. Catalyzes the coordinated movement of the two tRNA molecules, the mRNA and conformational changes in the ribosome. This chain is Elongation factor G, found in Chlorobium chlorochromatii (strain CaD3).